The following is a 24-amino-acid chain: 60 kDa chaperonin, mitochondrial (24 aa).

The protein belongs to the chaperonin (HSP60) family. As to quaternary structure, forms a single seven-member ring complex, in tight association with the p63 protein. As to expression, testis.

The protein resides in the mitochondrion. Implicated in mitochondrial protein import and macromolecular assembly. May facilitate the correct folding of imported proteins. May also prevent misfolding and promote the refolding and proper assembly of unfolded polypeptides generated under stress conditions in the mitochondrial matrix. The protein is 60 kDa chaperonin, mitochondrial of Heliothis virescens (Tobacco budworm moth).